Here is a 191-residue protein sequence, read N- to C-terminus: uncharacterized protein (191 aa).

This is an uncharacterized protein from Acanthamoeba polyphaga (Amoeba).